Here is a 372-residue protein sequence, read N- to C-terminus: N-methyl-L-tryptophan oxidase (372 aa).

Residue 4–34 (DLIIIGSGSVGAAAGYYATRAGLKVLMTDAH) coordinates FAD. S-8alpha-FAD cysteine is present on cysteine 307.

This sequence belongs to the MSOX/MTOX family. MTOX subfamily. As to quaternary structure, monomer. It depends on FAD as a cofactor.

The enzyme catalyses N(alpha)-methyl-L-tryptophan + O2 + H2O = L-tryptophan + formaldehyde + H2O2. In terms of biological role, catalyzes the oxidative demethylation of N-methyl-L-tryptophan. This chain is N-methyl-L-tryptophan oxidase, found in Citrobacter koseri (strain ATCC BAA-895 / CDC 4225-83 / SGSC4696).